The chain runs to 354 residues: Uroporphyrinogen decarboxylase (354 aa).

Residues 25–29 (RQAGR), Phe44, Asp75, Tyr152, Thr207, and His330 each bind substrate.

Belongs to the uroporphyrinogen decarboxylase family. As to quaternary structure, homodimer.

The protein localises to the cytoplasm. It carries out the reaction uroporphyrinogen III + 4 H(+) = coproporphyrinogen III + 4 CO2. Its pathway is porphyrin-containing compound metabolism; protoporphyrin-IX biosynthesis; coproporphyrinogen-III from 5-aminolevulinate: step 4/4. Catalyzes the decarboxylation of four acetate groups of uroporphyrinogen-III to yield coproporphyrinogen-III. This is Uroporphyrinogen decarboxylase from Xylella fastidiosa (strain Temecula1 / ATCC 700964).